The following is a 361-amino-acid chain: Molybdopterin synthase catalytic subunit (361 aa).

Substrate is bound by residues 101-102 (HR), Lys-117, and 124-126 (KKE).

The protein belongs to the MoaE family. MOCS2B subfamily. Heterotetramer; composed of 2 small (Mocs2A) and 2 large (Mocs2B) subunits.

Its subcellular location is the cytoplasm. The catalysed reaction is 2 [molybdopterin-synthase sulfur-carrier protein]-C-terminal-Gly-aminoethanethioate + cyclic pyranopterin phosphate + H2O = molybdopterin + 2 [molybdopterin-synthase sulfur-carrier protein]-C-terminal Gly-Gly + 2 H(+). It participates in cofactor biosynthesis; molybdopterin biosynthesis. Its function is as follows. Catalytic subunit of the molybdopterin synthase complex, a complex that catalyzes the conversion of precursor Z into molybdopterin. Acts by mediating the incorporation of 2 sulfur atoms from thiocarboxylated Mocs2A into precursor Z to generate a dithiolene group. The sequence is that of Molybdopterin synthase catalytic subunit from Drosophila pseudoobscura pseudoobscura (Fruit fly).